Reading from the N-terminus, the 411-residue chain is [Pyruvate dehydrogenase (acetyl-transferring)] kinase isozyme 4, mitochondrial (411 aa).

Positions 138–368 (IIEYKDACTV…DAIIYLKALS (231 aa)) constitute a Histidine kinase domain. Residues 254 to 261 (ELFKNAMR), Asp293, 312 to 313 (ST), and 329 to 334 (GFGYGL) each bind ATP.

This sequence belongs to the PDK/BCKDK protein kinase family. Homodimer. Interacts with the pyruvate dehydrogenase complex subunit DLAT, and is part of the multimeric pyruvate dehydrogenase complex that contains multiple copies of pyruvate dehydrogenase (E1), dihydrolipoamide acetyltransferase (DLAT, E2) and lipoamide dehydrogenase (DLD, E3). Ubiquitous; highest levels of expression in heart and skeletal muscle.

Its subcellular location is the mitochondrion matrix. The catalysed reaction is L-seryl-[pyruvate dehydrogenase E1 alpha subunit] + ATP = O-phospho-L-seryl-[pyruvate dehydrogenase E1 alpha subunit] + ADP + H(+). Functionally, kinase that plays a key role in regulation of glucose and fatty acid metabolism and homeostasis via phosphorylation of the pyruvate dehydrogenase subunits PDHA1 and PDHA2. This inhibits pyruvate dehydrogenase activity, and thereby regulates metabolite flux through the tricarboxylic acid cycle, down-regulates aerobic respiration and inhibits the formation of acetyl-coenzyme A from pyruvate. Inhibition of pyruvate dehydrogenase decreases glucose utilization and increases fat metabolism in response to prolonged fasting and starvation. Plays an important role in maintaining normal blood glucose levels under starvation, and is involved in the insulin signaling cascade. Via its regulation of pyruvate dehydrogenase activity, plays an important role in maintaining normal blood pH and in preventing the accumulation of ketone bodies under starvation. In the fed state, mediates cellular responses to glucose levels and to a high-fat diet. Regulates both fatty acid oxidation and de novo fatty acid biosynthesis. Plays a role in the generation of reactive oxygen species. Protects detached epithelial cells against anoikis. Plays a role in cell proliferation via its role in regulating carbohydrate and fatty acid metabolism. This is [Pyruvate dehydrogenase (acetyl-transferring)] kinase isozyme 4, mitochondrial (PDK4) from Homo sapiens (Human).